The chain runs to 178 residues: Ribulose bisphosphate carboxylase small subunit, chloroplastic (178 aa).

A chloroplast-targeting transit peptide spans 1 to 54 (MALISSAAVTTINRAPVQANLATPFTGLKSSAGFPVTKKNNDITSITSNGSRVN).

This sequence belongs to the RuBisCO small chain family. In terms of assembly, heterohexadecamer of 8 large and 8 small subunits.

Its subcellular location is the plastid. It localises to the chloroplast. In terms of biological role, ruBisCO catalyzes two reactions: the carboxylation of D-ribulose 1,5-bisphosphate, the primary event in carbon dioxide fixation, as well as the oxidative fragmentation of the pentose substrate. Both reactions occur simultaneously and in competition at the same active site. Although the small subunit is not catalytic it is essential for maximal activity. This chain is Ribulose bisphosphate carboxylase small subunit, chloroplastic, found in Trifolium repens (Creeping white clover).